The chain runs to 396 residues: 4-hydroxy-3-methylbut-2-en-1-yl diphosphate synthase (ferredoxin) (396 aa).

Residues Cys-305, Cys-308, Cys-339, and Glu-346 each contribute to the [4Fe-4S] cluster site.

It belongs to the IspG family. It depends on [4Fe-4S] cluster as a cofactor.

It catalyses the reaction (2E)-4-hydroxy-3-methylbut-2-enyl diphosphate + 2 oxidized [2Fe-2S]-[ferredoxin] + H2O = 2-C-methyl-D-erythritol 2,4-cyclic diphosphate + 2 reduced [2Fe-2S]-[ferredoxin] + H(+). Its pathway is isoprenoid biosynthesis; isopentenyl diphosphate biosynthesis via DXP pathway; isopentenyl diphosphate from 1-deoxy-D-xylulose 5-phosphate: step 5/6. In terms of biological role, converts 2C-methyl-D-erythritol 2,4-cyclodiphosphate (ME-2,4cPP) into 1-hydroxy-2-methyl-2-(E)-butenyl 4-diphosphate. This chain is 4-hydroxy-3-methylbut-2-en-1-yl diphosphate synthase (ferredoxin), found in Gloeobacter violaceus (strain ATCC 29082 / PCC 7421).